Here is a 166-residue protein sequence, read N- to C-terminus: NADH-ubiquinone oxidoreductase chain 6 (166 aa).

The next 6 membrane-spanning stretches (helical) occupy residues 4-24 (FFSL…VVSA), 27-47 (QGVV…VFLG), 50-70 (FAAL…FGYC), 82-102 (VGGT…LLCL), 109-129 (LLVY…VGVF), and 135-155 (WGLI…LVIL).

This sequence belongs to the complex I subunit 6 family.

It localises to the mitochondrion membrane. It catalyses the reaction a ubiquinone + NADH + 5 H(+)(in) = a ubiquinol + NAD(+) + 4 H(+)(out). In terms of biological role, core subunit of the mitochondrial membrane respiratory chain NADH dehydrogenase (Complex I) that is believed to belong to the minimal assembly required for catalysis. Complex I functions in the transfer of electrons from NADH to the respiratory chain. The immediate electron acceptor for the enzyme is believed to be ubiquinone. The sequence is that of NADH-ubiquinone oxidoreductase chain 6 (MT-ND6) from Lycodon semicarinatus (Ryukyu odd-tooth snake).